Reading from the N-terminus, the 610-residue chain is UvrABC system protein C (610 aa).

Residues 16 to 94 (SQPGVYRMYD…IKLYQPRYNV (79 aa)) form the GIY-YIG domain. Residues 204–239 (DQVLTQLISRMETASQNLEFEEAARIRDQIQAVRRV) enclose the UVR domain.

Belongs to the UvrC family. In terms of assembly, interacts with UvrB in an incision complex.

It localises to the cytoplasm. Its function is as follows. The UvrABC repair system catalyzes the recognition and processing of DNA lesions. UvrC both incises the 5' and 3' sides of the lesion. The N-terminal half is responsible for the 3' incision and the C-terminal half is responsible for the 5' incision. This Escherichia coli O1:K1 / APEC protein is UvrABC system protein C.